A 35-amino-acid chain; its full sequence is Conotoxin Cal6.1g (35 aa).

Residues 1–8 (GLSRPSKR) constitute a propeptide that is removed on maturation. Intrachain disulfides connect Cys9–Cys25, Cys16–Cys29, and Cys24–Cys34.

It belongs to the conotoxin O1 superfamily. In terms of tissue distribution, expressed by the venom duct.

It localises to the secreted. Probable neurotoxin with unknown target. Possibly targets ion channels. The protein is Conotoxin Cal6.1g of Californiconus californicus (California cone).